Here is a 112-residue protein sequence, read N- to C-terminus: Putative regulatory protein DP2861 (112 aa).

It belongs to the RemA family.

The polypeptide is Putative regulatory protein DP2861 (Desulfotalea psychrophila (strain LSv54 / DSM 12343)).